We begin with the raw amino-acid sequence, 398 residues long: Acetate kinase (398 aa).

Asparagine 8 contacts Mg(2+). Residue lysine 15 participates in ATP binding. Arginine 89 contacts substrate. Aspartate 146 serves as the catalytic Proton donor/acceptor. ATP-binding positions include 206–210 (HIGNG), 283–285 (DMR), and 331–335 (GMGEN). Glutamate 383 lines the Mg(2+) pocket.

It belongs to the acetokinase family. As to quaternary structure, homodimer. It depends on Mg(2+) as a cofactor. Mn(2+) serves as cofactor.

It localises to the cytoplasm. It carries out the reaction acetate + ATP = acetyl phosphate + ADP. It participates in metabolic intermediate biosynthesis; acetyl-CoA biosynthesis; acetyl-CoA from acetate: step 1/2. Catalyzes the formation of acetyl phosphate from acetate and ATP. Can also catalyze the reverse reaction. The chain is Acetate kinase from Streptococcus pyogenes serotype M49 (strain NZ131).